A 97-amino-acid polypeptide reads, in one-letter code: DNA/RNA-binding protein Alba (97 aa).

Position 15 is an N6-acetyllysine (Lys-15).

It belongs to the histone-like Alba family. In terms of processing, acetylated. Acetylation at Lys-15 decreases DNA-binding affinity.

Its subcellular location is the cytoplasm. The protein localises to the chromosome. Its function is as follows. Binds double-stranded DNA tightly but without sequence specificity. Involved in DNA compaction. This chain is DNA/RNA-binding protein Alba, found in Sulfolobus acidocaldarius (strain ATCC 33909 / DSM 639 / JCM 8929 / NBRC 15157 / NCIMB 11770).